Here is a 305-residue protein sequence, read N- to C-terminus: UDP-3-O-acyl-N-acetylglucosamine deacetylase (305 aa).

Zn(2+) is bound by residues histidine 79, histidine 238, and aspartate 242. Residue histidine 265 is the Proton donor of the active site.

This sequence belongs to the LpxC family. Requires Zn(2+) as cofactor.

It carries out the reaction a UDP-3-O-[(3R)-3-hydroxyacyl]-N-acetyl-alpha-D-glucosamine + H2O = a UDP-3-O-[(3R)-3-hydroxyacyl]-alpha-D-glucosamine + acetate. The protein operates within glycolipid biosynthesis; lipid IV(A) biosynthesis; lipid IV(A) from (3R)-3-hydroxytetradecanoyl-[acyl-carrier-protein] and UDP-N-acetyl-alpha-D-glucosamine: step 2/6. In terms of biological role, catalyzes the hydrolysis of UDP-3-O-myristoyl-N-acetylglucosamine to form UDP-3-O-myristoylglucosamine and acetate, the committed step in lipid A biosynthesis. This is UDP-3-O-acyl-N-acetylglucosamine deacetylase from Shewanella woodyi (strain ATCC 51908 / MS32).